We begin with the raw amino-acid sequence, 695 residues long: Transketolase (695 aa).

Residue His-37 participates in substrate binding. Thiamine diphosphate is bound by residues His-77 and 126–128; that span reads GPL. Asp-164 provides a ligand contact to Mg(2+). Thiamine diphosphate is bound by residues Gly-165 and Asn-194. Mg(2+) is bound by residues Asn-194 and Ile-196. Substrate is bound by residues His-268, Arg-361, and Ser-388. His-268 lines the thiamine diphosphate pocket. Residue Glu-415 is the Proton donor of the active site. Residue Phe-441 coordinates thiamine diphosphate. Substrate contacts are provided by His-465, Asp-473, and Arg-524.

This sequence belongs to the transketolase family. As to quaternary structure, homodimer. It depends on Mg(2+) as a cofactor. Ca(2+) is required as a cofactor. The cofactor is Mn(2+). Requires Co(2+) as cofactor. Thiamine diphosphate serves as cofactor.

It carries out the reaction D-sedoheptulose 7-phosphate + D-glyceraldehyde 3-phosphate = aldehydo-D-ribose 5-phosphate + D-xylulose 5-phosphate. It participates in carbohydrate biosynthesis; Calvin cycle. Its function is as follows. Catalyzes the transfer of a two-carbon ketol group from a ketose donor to an aldose acceptor, via a covalent intermediate with the cofactor thiamine pyrophosphate. The protein is Transketolase (cbbT) of Sinorhizobium medicae (strain WSM419) (Ensifer medicae).